The chain runs to 232 residues: TIR domain-containing adapter molecule 2 (232 aa).

The span at 1–10 (MGIGKSKMDP) shows a compositional bias: basic and acidic residues. Residues 1–71 (MGIGKSKMDP…VEERPEEDTE (71 aa)) are disordered. Gly2 carries N-myristoyl glycine lipidation. Positions 19 to 29 (KSQSVDTSQSH) are enriched in polar residues. Basic and acidic residues predominate over residues 30-42 (HMSDSKQSEEISL). Residues 55-71 (PAEEQEGVEERPEEDTE) are compositionally biased toward acidic residues. In terms of domain architecture, TIR spans 70–226 (TEEEVFLKFV…AIWKETRNTV (157 aa)). Tyr164 is modified (phosphotyrosine).

In terms of assembly, homodimer. Interacts with TLR4, TICAM1, IRF3 and IRF7 in response to LPS. Interacts with IL1R1, IL1RAP, IRAK2, IRAK3 and TRAF6. Interacts with protein kinase-inactive mutants of IRAK1 and IRAK4. Isoform 1 interacts with isoform 2; the interaction occurs in late endosomes and disrupts the interaction between isoform 1 and TICAM1. Interacts with MYD88; the interaction decreases after IL-18 stimulation in a time-dependent manner. Interacts with IL18R1 and IL18RAP. Interacts with TLR2. Interacts with RAB11FIP2. Post-translationally, myristoylated. Required for membrane association which is critical for its ability to initiate efficient signaling. In terms of processing, phosphorylated by PRKCE in response to LPS. Phosphorylation is essential for its function. It is depleted from the membrane upon phosphorylation. Tyrosine phosphorylation is inhibited by phosphatase PTPN4.

It localises to the cytoplasm. It is found in the golgi apparatus. The protein localises to the cell membrane. Its subcellular location is the endoplasmic reticulum. The protein resides in the early endosome. It localises to the late endosome. It is found in the cell projection. The protein localises to the phagocytic cup. Functions as a sorting adapter in different signaling pathways to facilitate downstream signaling leading to type I interferon induction. In TLR4 signaling, physically bridges TLR4 and TICAM1 and functionally transmits signal to TICAM1 in early endosomes after endocytosis of TLR4. In TLR2 signaling, physically bridges TLR2 and MYD88 and is required for the TLR2-dependent movement of MYD88 to endosomes following ligand engagement. Involved in IL-18 signaling and is proposed to function as a sorting adapter for MYD88 in IL-18 signaling during adaptive immune response. Forms a complex with RAB11FIP2 that is recruited to the phagosomes to promote the activation of the actin-regulatory GTPases RAC1 and CDC42 and subsequent phagocytosis of Gram-negative bacteria. The sequence is that of TIR domain-containing adapter molecule 2 (TICAM2) from Bos taurus (Bovine).